Reading from the N-terminus, the 279-residue chain is uncharacterized protein (279 aa).

This is an uncharacterized protein from Acanthamoeba polyphaga (Amoeba).